Reading from the N-terminus, the 134-residue chain is uncharacterized protein (134 aa).

Helical transmembrane passes span 8–28 (FTSL…TVMY), 54–74 (GFQA…TFLL), and 113–133 (LACF…RLVD).

The protein belongs to the cornichon family.

It is found in the endoplasmic reticulum membrane. This is an uncharacterized protein from Schizosaccharomyces pombe (strain 972 / ATCC 24843) (Fission yeast).